Here is a 112-residue protein sequence, read N- to C-terminus: UPF0060 membrane protein CMS0846 (112 aa).

4 consecutive transmembrane segments (helical) span residues 6 to 26 (VILFALAAVAEIGGAWLIWQA), 32 to 52 (PFWWAGLGVMALGAYGFIATL), 61 to 81 (ILAAYGGVFVAGSLLWGTVVD), and 87 to 107 (RWDVIGAVVCLVGVAVIMAAP).

Belongs to the UPF0060 family.

The protein resides in the cell membrane. The sequence is that of UPF0060 membrane protein CMS0846 from Clavibacter sepedonicus (Clavibacter michiganensis subsp. sepedonicus).